We begin with the raw amino-acid sequence, 495 residues long: IQ domain-containing protein IQM5 (495 aa).

The tract at residues 89–122 (ENRGGEEEDERGSSPKRRNRGNLTALSLPAPTPF) is disordered. An IQ domain is found at 131–160 (LDAAAVTLQKVYKSYRTRRNLADCAVVVEE).

Expressed in roots, rosette and cauline leaves, and at lower levels in stems, flowers and siliques.

It localises to the cytoplasm. The protein resides in the nucleus. May be involved in biotic and abiotic stress responses. The chain is IQ domain-containing protein IQM5 from Arabidopsis thaliana (Mouse-ear cress).